Here is a 246-residue protein sequence, read N- to C-terminus: tRNA (guanine-N(1)-)-methyltransferase (246 aa).

S-adenosyl-L-methionine-binding positions include Gly114 and 134–139; that span reads IGDYIL. The span at 219-231 shows a compositional bias: basic and acidic residues; sequence LRRPDLWERHEGA. The segment at 219 to 246 is disordered; it reads LRRPDLWERHEGARAQSPSGARRQKKER.

Belongs to the RNA methyltransferase TrmD family. As to quaternary structure, homodimer.

The protein localises to the cytoplasm. It catalyses the reaction guanosine(37) in tRNA + S-adenosyl-L-methionine = N(1)-methylguanosine(37) in tRNA + S-adenosyl-L-homocysteine + H(+). Specifically methylates guanosine-37 in various tRNAs. In Rhizorhabdus wittichii (strain DSM 6014 / CCUG 31198 / JCM 15750 / NBRC 105917 / EY 4224 / RW1) (Sphingomonas wittichii), this protein is tRNA (guanine-N(1)-)-methyltransferase.